The sequence spans 116 residues: Tachykinin-3 (116 aa).

The N-terminal stretch at 1-20 is a signal peptide; sequence MRSAMLFAAVLALSLAWTFG. Residues 21-79 constitute a propeptide that is removed on maturation; the sequence is AVCEEPQGQGGRLSKDSDLYQLPPSLLRRLYDSRPVSLEGLLKVLSKASVGPKETSLPQ. Met91 carries the post-translational modification Methionine amide. Positions 93–116 are disordered; it reads KRNSQPDTPTDVVEENTPSFGILK. Residues 95 to 116 constitute a propeptide that is removed on maturation; sequence NSQPDTPTDVVEENTPSFGILK.

This sequence belongs to the tachykinin family.

It is found in the secreted. Its function is as follows. Tachykinins are active peptides which excite neurons, evoke behavioral responses, are potent vasodilators and secretagogues, and contract (directly or indirectly) many smooth muscles. Is a critical central regulator of gonadal function. In Mus musculus (Mouse), this protein is Tachykinin-3 (Tac3).